Reading from the N-terminus, the 267-residue chain is Putative metal-binding protein TM_0123 (267 aa).

The first 15 residues, 1-15 (MKKILLLLVLIVAVL), serve as a signal peptide directing secretion. Histidine 53, histidine 107, and histidine 172 together coordinate a divalent metal cation.

Belongs to the bacterial solute-binding protein 9 family.

Its subcellular location is the periplasm. Functionally, part of an ATP-binding cassette (ABC) transport system involved in metal import. Binds a metal with high affinity and specificity and delivers it to the membrane permease for translocation into the cytoplasm. In Thermotoga maritima (strain ATCC 43589 / DSM 3109 / JCM 10099 / NBRC 100826 / MSB8), this protein is Putative metal-binding protein TM_0123.